The chain runs to 202 residues: UMP-CMP kinase 3 (202 aa).

24–29 (GSGKGT) contacts ATP. Residues 44–73 (SAGDLLRAEIKSGSENGTMIQNMIKEGKIV) form an NMP region. A ribonucleoside 5'-phosphate-binding positions include R50, 71 to 73 (KIV), and 98 to 101 (GFPR). A CMP-binding site is contributed by N105. The interval 136–144 (GRNQGREDD) is LID. R137 contacts ATP. A ribonucleoside 5'-phosphate is bound by residues R141 and R152. Residue K180 coordinates ATP.

As to quaternary structure, monomer. Requires Mg(2+) as cofactor.

Its subcellular location is the cytoplasm. It localises to the nucleus. It catalyses the reaction CMP + ATP = CDP + ADP. It carries out the reaction dCMP + ATP = dCDP + ADP. The catalysed reaction is UMP + ATP = UDP + ADP. In terms of biological role, catalyzes the phosphorylation of pyrimidine nucleoside monophosphates at the expense of ATP. Plays an important role in de novo pyrimidine nucleotide biosynthesis. Has preference for UMP and CMP as phosphate acceptors. Does not act on dCMP and dUMP. In Arabidopsis thaliana (Mouse-ear cress), this protein is UMP-CMP kinase 3 (UMK3).